A 578-amino-acid chain; its full sequence is Tetratricopeptide repeat protein ttc-39B (578 aa).

TPR repeat units lie at residues 297–330 (AIMLFMKARLLLISGDIEAAIHYFNMSIESQDVY), 481–514 (CLYYFLKGVALRHLSLHAQAEECFKIVLERESSI), and 522–554 (PNATYELAMLRISEQQFMEAQTLLDKARAYKSY).

This is Tetratricopeptide repeat protein ttc-39B from Caenorhabditis elegans.